We begin with the raw amino-acid sequence, 780 residues long: Protein AMEIOTIC 1 (780 aa).

Disordered regions lie at residues 32 to 60 (KKKT…SPLS) and 237 to 327 (APKE…RWSA). Positions 50–60 (DSTIQPRSPLS) are enriched in polar residues. 2 stretches are compositionally biased toward basic and acidic residues: residues 263-291 (EVKR…EGKK) and 309-327 (RTVE…RWSA). The stretch at 448–547 (VEELTEEVNG…LEEQVTYLSS (100 aa)) forms a coiled coil.

It localises to the nucleus. The protein localises to the chromosome. In terms of biological role, plays a fundamental role in building the proper chromosome structure at the beginning of meiosis in male meiocytes. Required for the transition from leptotene to zygotene in meiocytes. Required for homologous chromosome pairing, and initiation and progression of meiotic recombination. Regulates meiocyte cytoskeleton organization. In Zea mays (Maize), this protein is Protein AMEIOTIC 1.